Consider the following 75-residue polypeptide: Penaeidin-3n (75 aa).

An N-terminal signal peptide occupies residues 1 to 19 (MRLVVCLVFLASFALVCQG). Position 20 is a pyrrolidone carboxylic acid (Gln20). Intrachain disulfides connect Cys44/Cys59 and Cys48/Cys66. Ser74 carries the serine amide modification.

It belongs to the penaeidin family.

The protein localises to the cytoplasmic granule. Antibacterial and antifungal activity. Presents chitin-binding activity. This Penaeus setiferus (Atlantic white shrimp) protein is Penaeidin-3n.